Here is a 232-residue protein sequence, read N- to C-terminus: Early E1A protein (232 aa).

Positions 40–48 (PTLHDLFDV) are interaction with RB1 in competition with E2F1. The span at 69–84 (TDSSASTEADSGFSPL) shows a compositional bias: low complexity. A disordered region spans residues 69–97 (TDSSASTEADSGFSPLSTPPVSPIPPHPT). The span at 85 to 97 (STPPVSPIPPHPT) shows a compositional bias: pro residues. Positions 107–111 (LLCLE) match the LXCXE motif, interaction with host RB1 motif. A zinc finger spans residues 146–164 (CLRCAFYQEQDDNALCGLC). Residues 175-232 (SAGAEEEDDEVIFVSAKPGGRKRSAATPCEPDGVSKRPCVPEPEQTEPLDLSLKPRPN) are disordered. Positions 222–226 (PLDLS) match the PXDLS motif, CTBP-binding motif. Positions 228 to 232 (KPRPN) match the Nuclear localization signal motif.

The protein belongs to the adenoviridae E1A protein family. Interacts with host UBE2I; this interaction interferes with polySUMOylation. Interacts with host RB1; this interaction induces the aberrant dissociation of RB1-E2F1 complex thereby disrupting the activity of RB1 and activating E2F1-regulated genes. Interacts with host ATF7; the interaction enhances ATF7-mediated viral transactivation activity which requires the zinc binding domains of both proteins. Isoform early E1A 32 kDa protein and isoform early E1A 26 kDa protein interact (via N-terminus) with CUL1 and E3 ubiquitin ligase RBX1; these interactions inhibit RBX1-CUL1-dependent elongation reaction of ubiquitin chains and attenuate ubiquitination of SCF(FBXW7) target proteins. Interacts (via PXLXP motif) with host ZMYND11/BS69 (via MYND-type zinc finger); this interaction inhibits E1A mediated transactivation. Interacts with host EP300; this interaction stimulates the acetylation of RB1 by recruiting EP300 and RB1 into a multimeric-protein complex. Interacts with host CTBP1 and CTBP2; this interaction seems to potentiate viral replication. Interacts with host DCAF7. Interacts with host DYRK1A. Interacts with host KPNA4; this interaction allows E1A import into the host nucleus. Interacts with host EP400; this interaction stabilizes MYC. Interacts with host TBP protein; this interaction probably disrupts the TBP-TATA complex.

It is found in the host nucleus. Its function is as follows. Plays a role in viral genome replication by driving entry of quiescent cells into the cell cycle. Stimulation of progression from G1 to S phase allows the virus to efficiently use the cellular DNA replicating machinery to achieve viral genome replication. E1A protein has both transforming and trans-activating activities. Induces the disassembly of the E2F1 transcription factor from RB1 by direct competition for the same binding site on RB1, with subsequent transcriptional activation of E2F1-regulated S-phase genes and of the E2 region of the adenoviral genome. Release of E2F1 leads to the ARF-mediated inhibition of MDM2 and causes TP53/p53 to accumulate because it is not targeted for degradation by MDM2-mediated ubiquitination anymore. This increase in TP53, in turn, would arrest the cell proliferation and direct its death but this effect is counteracted by the viral protein E1B-55K. Inactivation of the ability of RB1 to arrest the cell cycle is critical for cellular transformation, uncontrolled cellular growth and proliferation induced by viral infection. Interaction with RBX1 and CUL1 inhibits ubiquitination of the proteins targeted by SCF(FBXW7) ubiquitin ligase complex, and may be linked to unregulated host cell proliferation. The tumorigenesis-restraining activity of E1A may be related to the disruption of the host CtBP-CtIP complex through the CtBP binding motif. This is Early E1A protein from Canine adenovirus serotype 2 (strain Toronto A 26-61) (CAdV-2).